The primary structure comprises 105 residues: Endogenous retrovirus group K member 8 Rec protein (105 aa).

The interval methionine 1–proline 48 is disordered. Basic residues predominate over residues alanine 10–arginine 20. The Nuclear localization signal signature appears at arginine 13–arginine 20. A Nuclear export signal motif is present at residues tryptophan 50–leucine 59.

In terms of assembly, forms homodimers, homotrimers, and homotetramers via a C-terminal domain. Associates with XPO1 and with ZNF145.

It localises to the cytoplasm. It is found in the nucleus. Its subcellular location is the nucleolus. Functionally, retroviral replication requires the nuclear export and translation of unspliced, singly-spliced and multiply-spliced derivatives of the initial genomic transcript. Rec interacts with a highly structured RNA element (RcRE) present in the viral 3'LTR and recruits the cellular nuclear export machinery. This permits export to the cytoplasm of unspliced genomic or incompletely spliced subgenomic viral transcripts. The protein is Endogenous retrovirus group K member 8 Rec protein (ERVK-8) of Homo sapiens (Human).